A 1423-amino-acid polypeptide reads, in one-letter code: MALVTVQRSPTPSTTSSPCASEADSGEEECRSQPRSISESFLTVKGAALFLPRGNGSSTPRVSHRRNKHAGDLQQHLQAMFILLRPEDNIRLAVRLESTYQNRTRYMVVVSTNGRQDTEESIVLGMDFSSNDSSTCTMGLVLPLWSDTLIHLDGDGGFSVSTDNRVHIFKPVSVQAMWSALQSLHKACEVARMHNYYPGSLFLTWVSYYESHINSDQSSVNEWNAMQDVQSHRPDSPALFTDIPTERERTERLIKTKLREIMMQKDLENITSKEIRTELEMQMVCNLREFKEFIDNEMIVILGQMDSPTQIFEHVFLGSEWNASNLEDLQNRGVRYILNVTREIDNFFPGVFEYHNIRVYDEEATDLLAYWNDTYKFISKAKKHGSKCLVHCKMGVSRSASTVIAYAMKEYGWNLDRAYDYVKERRTVTKPNPSFMRQLEEYQGILLASKQRHNKLWRSHSDSDLSDHHEPICKPGLELNKKEMTTSADQIAEVKTVENLAAMPTVFMEHVVPQDANQKGLHTKERVICLEFSSQEFRAGQIEDELNLNDINGCSSGCCLSESKLPLDNCHASKALLQPGQAPDIANKFPDLAVEDLETDALKADMNVHLLPMEELTSRLKDLPMSPDLESPSPQASCQAAISDFSTDRIDFFSALEKFVELSQETRSRSFSHSRIEELGGGRSEGCRLSVIEVAASEMAADDQRSSSLSNTPHASEESSVDEDQSKAITELVSPDIIMQSHSENAISVKEIVTEIESISQGVGQVQLKGDILSNPCHTPKKSTIHELPLERVPAPESKPGHWEQDESFCSVQPELARDSGKCAPEEGCLTTHSSTADLEEEEPVEGEHDWGPGMHSGAKWCPGSVRRATLEFEERLRQEQENHGTASAGPTLSNRKNSKNDSSVADLMPKWKSDETTPEHSFFLKEAEPSKGKGKCSGSEAGSLSHCERNPTMPDCELLEHHSLPAPQDCLGSDSRSKKQEGDLKKQRAVVPNQECDTQAILLPLPKKIEIIEYTPTVTSLGHTEPGGEATPSKEGEKQGLRKVKMEQSITMFCALDENLNRTLEPSQVSLHPQVLPLPHSSSECDRPADPNPMLSSPQDKGDCPSTPFKTAAPFVSCSTQGASFSLDYLLPHSVVHLEGCTEQSSATDNELSPEQASWEDSRGHFLSSGSGMAHTSSPLTNEDLSLINKLGDSVGVLQKKLDPSPEACRIPHSSSSENIRDLSHSRGVVKEHAKEIESRVIFQAGFSKTSQMKRSASLAKLGYLDLCKDYLPDRELVSSESPHLKLLQPFLRTDSGMHALMAHEPSESAGAQQNPQPTKYSVEQLKTSECIVQSKPVERPSVQYAKEFGYSQQCLLPKARPELTSSEGGLPLLQTQGLQYTGPSPGLAVAPRQQHGRTHPLRRLKRANDKKRTTNPFYNTM.

Disordered stretches follow at residues 1 to 37 (MALV…PRSI) and 51 to 70 (LPRG…NKHA). Positions 9 to 18 (SPTPSTTSSP) are enriched in low complexity. Residues serine 17, serine 25, and serine 36 each carry the phosphoserine modification. The DEK-C domain maps to 248-303 (ERTERLIKTKLREIMMQKDLENITSKEIRTELEMQMVCNLREFKEFIDNEMIVILG). Positions 307–448 (SPTQIFEHVF…LEEYQGILLA (142 aa)) constitute a Tyrosine-protein phosphatase domain. Catalysis depends on cysteine 392, which acts as the Phosphocysteine intermediate. Residues serine 461, serine 487, serine 534, serine 631, and serine 633 each carry the phosphoserine modification. Disordered stretches follow at residues 698-725 (EMAA…DEDQ), 833-858 (HSST…MHSG), 878-950 (RQEQ…HCER), 967-991 (APQD…QRAV), 1021-1042 (SLGH…KQGL), 1074-1105 (PQVL…KGDC), and 1207-1226 (PEAC…DLSH). Positions 884 to 904 (HGTASAGPTLSNRKNSKNDSS) are enriched in polar residues. Composition is skewed to basic and acidic residues over residues 910–932 (PKWK…EPSK), 976–987 (SRSKKQEGDLKK), and 1033–1042 (PSKEGEKQGL). Serine 1217 is modified (phosphoserine). Threonine 1422 bears the Phosphothreonine mark.

This sequence belongs to the protein-tyrosine phosphatase family. Interacts with filamentous actin. In terms of tissue distribution, expressed in brain, heart, liver, skeletal muscle, testis and thymus. Also expressed at lower levels in kidney, small intestine and spleen. Within testicular seminiferous tubules expressed in germ cells and spermatocytes, where it has a cytoplasmic localization, and round spermatids, where it concentrates in the acrosomal region next to the nucleus.

The protein localises to the cytoplasm. It localises to the cytoskeleton. Its subcellular location is the cell junction. It is found in the focal adhesion. The protein resides in the cytoplasmic vesicle. The protein localises to the secretory vesicle. It localises to the acrosome. The catalysed reaction is O-phospho-L-tyrosyl-[protein] + H2O = L-tyrosyl-[protein] + phosphate. It catalyses the reaction O-phospho-L-seryl-[protein] + H2O = L-seryl-[protein] + phosphate. It carries out the reaction O-phospho-L-threonyl-[protein] + H2O = L-threonyl-[protein] + phosphate. Protein phosphatase which regulates actin filament dynamics. Dephosphorylates and activates the actin binding/depolymerizing factor cofilin, which subsequently binds to actin filaments and stimulates their disassembly. Inhibitory phosphorylation of cofilin is mediated by LIMK1, which may also be dephosphorylated and inactivated by this protein. Required for spermatogenesis. Involved in acrosome biogenesis, probably by regulating cofilin-mediated actin cytoskeleton remodeling during proacrosomal vesicle fusion and/or Golgi to perinuclear vesicle trafficking. This Mus musculus (Mouse) protein is Protein phosphatase Slingshot homolog 2 (Ssh2).